Here is a 39-residue protein sequence, read N- to C-terminus: Cytochrome b559 subunit beta (39 aa).

Residues 14–30 (WLAIHGLAVPTVFSLGS) form a helical membrane-spanning segment. Residue histidine 18 participates in heme binding.

The protein belongs to the PsbE/PsbF family. As to quaternary structure, heterodimer of an alpha subunit and a beta subunit. PSII is composed of 1 copy each of membrane proteins PsbA, PsbB, PsbC, PsbD, PsbE, PsbF, PsbH, PsbI, PsbJ, PsbK, PsbL, PsbM, PsbT, PsbX, PsbY, PsbZ, Psb30/Ycf12, at least 3 peripheral proteins of the oxygen-evolving complex and a large number of cofactors. It forms dimeric complexes. Requires heme b as cofactor.

The protein resides in the plastid. The protein localises to the chloroplast thylakoid membrane. Functionally, this b-type cytochrome is tightly associated with the reaction center of photosystem II (PSII). PSII is a light-driven water:plastoquinone oxidoreductase that uses light energy to abstract electrons from H(2)O, generating O(2) and a proton gradient subsequently used for ATP formation. It consists of a core antenna complex that captures photons, and an electron transfer chain that converts photonic excitation into a charge separation. This is Cytochrome b559 subunit beta from Huperzia lucidula (Shining clubmoss).